The chain runs to 375 residues: Alcohol dehydrogenase 1C (375 aa).

Serine 2 carries the N-acetylserine modification. Serine 23 is modified (phosphoserine). Zn(2+) is bound by residues cysteine 47, histidine 68, cysteine 98, cysteine 101, cysteine 104, cysteine 112, and cysteine 175. NAD(+) contacts are provided by residues 200 to 205 (GLGGVG), aspartate 224, lysine 229, isoleucine 270, 293 to 295 (VGV), 318 to 320 (AIF), and arginine 370.

Belongs to the zinc-containing alcohol dehydrogenase family. Dimer of identical or non-identical chains of class I alcohol dehydrogenase: ADH1A, ADH1B, and ADH1C. The cofactor is Zn(2+).

The protein resides in the cytoplasm. It carries out the reaction a primary alcohol + NAD(+) = an aldehyde + NADH + H(+). The catalysed reaction is ethanol + NAD(+) = acetaldehyde + NADH + H(+). Its function is as follows. Alcohol dehydrogenase. Exhibits high activity for ethanol oxidation and plays a major role in ethanol catabolism. In Homo sapiens (Human), this protein is Alcohol dehydrogenase 1C (ADH1C).